The following is a 313-amino-acid chain: MSDKILRIATRRSPLALWQAEYVQRRLIACHPGLRVELLPMVTRGDVILDTPLAKVGGKGLFVKELEQAMLSGSADIAVHSMKDVPVAFPPGLGLVAICEREDPHDAFVSHHYTSVDSLPQGAIVGTSSLRRQCQLSARRPDLVIRSLRGNVGTRLGKLDAGEYDAIILAVAGLKRLGLGDRIRQVMPAEESLPAVGQGAVGIECRLDDIQTIALLAALNHSETACRVSAERAMNTRLEGGCQVPIGSYALLEDDQLWLRGLVGSPDGNEMVRGERRGPRADAEKMGISLAEELLENGARDILAAVYQGNPPA.

Cysteine 242 carries the post-translational modification S-(dipyrrolylmethanemethyl)cysteine.

Belongs to the HMBS family. As to quaternary structure, monomer. Requires dipyrromethane as cofactor.

It catalyses the reaction 4 porphobilinogen + H2O = hydroxymethylbilane + 4 NH4(+). Its pathway is porphyrin-containing compound metabolism; protoporphyrin-IX biosynthesis; coproporphyrinogen-III from 5-aminolevulinate: step 2/4. Functionally, tetrapolymerization of the monopyrrole PBG into the hydroxymethylbilane pre-uroporphyrinogen in several discrete steps. This chain is Porphobilinogen deaminase, found in Erwinia tasmaniensis (strain DSM 17950 / CFBP 7177 / CIP 109463 / NCPPB 4357 / Et1/99).